Here is a 1484-residue protein sequence, read N- to C-terminus: Chromosome partition protein MukB (1484 aa).

Position 34–41 (34–41 (GGNGAGKS)) interacts with ATP. Coiled-coil stretches lie at residues 338–415 (NLVQ…RAIQ), 496–604 (QTAR…ALAW), 781–805 (AARESRLENLSAERDVLAERYATLS), 835–868 (EAEMRTLNGRRGELERELSDHHGQNQQSRQHYDQ), 903–1115 (HDAQ…SAKA), and 1206–1265 (DDPV…LQAV). Positions 666–783 (PGGTDDARLT…AVPLFGRAAR (118 aa)) are flexible hinge.

This sequence belongs to the SMC family. MukB subfamily. As to quaternary structure, homodimerization via its hinge domain. Binds to DNA via its C-terminal region. Interacts, and probably forms a ternary complex, with MukE and MukF via its C-terminal region. The complex formation is stimulated by calcium or magnesium. Interacts with tubulin-related protein FtsZ.

Its subcellular location is the cytoplasm. The protein resides in the nucleoid. Its function is as follows. Plays a central role in chromosome condensation, segregation and cell cycle progression. Functions as a homodimer, which is essential for chromosome partition. Involved in negative DNA supercoiling in vivo, and by this means organize and compact chromosomes. May achieve or facilitate chromosome segregation by condensation DNA from both sides of a centrally located replisome during cell division. In Sodalis glossinidius (strain morsitans), this protein is Chromosome partition protein MukB.